The sequence spans 453 residues: MYKTKCLREKLVLFLKIFFPILIYQFANYSASFVDTAMTGQYNTMDLAGVSMATSIWNPFFTFLTGIVSALVPIIGHHLGRGKKEEVASDFYQFIYLALGLSVVLLGMVLFLAPTILNHIGLEAAVAAVAVRYLWFLSIGIIPLLLFSVIRSLLDSLGLTKLSMYLMLLLLPLNSGFNYLLIYGAFGVPELGGAGAGLGTSLAYWVLLGISVLVLFKQEKLKALHLEKRILLNMDKIKEGVRLGLPIGGTVFAEVAVFSVVGLIMAKFSSLIIASHQSAMNFSSLMYAFPMSISSAMAIVVSYEVGAKRFDDAKTYIGLGRWTALIFAAFTLTFLYIFRGNVASLYGNDPKFIDLTARFLTYSLFFQLADTFAAPLQGILRGYKDTVIPFYLGLLGYWGVAIPVATLFDSLTDFGAYSYWIGLIISLIVSGALYRWRLTVIMKRFESLAKSKR.

12 helical membrane-spanning segments follow: residues 12–34 (VLFLKIFFPILIYQFANYSASFV), 54–76 (TSIWNPFFTFLTGIVSALVPIIG), 96–118 (YLALGLSVVLLGMVLFLAPTILN), 128–150 (AVAVRYLWFLSIGIIPLLLFSVI), 162–184 (LSMYLMLLLLPLNSGFNYLLIYG), 194–216 (AGAGLGTSLAYWVLLGISVLVLF), 243–265 (LGLPIGGTVFAEVAVFSVVGLIM), 285–307 (LMYAFPMSISSAMAIVVSYEVGA), 319–338 (LGRWTALIFAAFTLTFLYIF), 358–380 (RFLTYSLFFQLADTFAAPLQGIL), 387–406 (VIPFYLGLLGYWGVAIPVAT), and 416–438 (AYSYWIGLIISLIVSGALYRWRL).

The protein belongs to the multi antimicrobial extrusion (MATE) (TC 2.A.66.1) family.

The protein localises to the cell membrane. Functionally, multidrug efflux pump. The sequence is that of Probable multidrug resistance protein NorM (norM) from Streptococcus pneumoniae (strain ATCC BAA-255 / R6).